The following is an 814-amino-acid chain: Glycogen phosphorylase (814 aa).

Residue lysine 662 is modified to N6-(pyridoxal phosphate)lysine.

Belongs to the glycogen phosphorylase family. It depends on pyridoxal 5'-phosphate as a cofactor.

The catalysed reaction is [(1-&gt;4)-alpha-D-glucosyl](n) + phosphate = [(1-&gt;4)-alpha-D-glucosyl](n-1) + alpha-D-glucose 1-phosphate. Phosphorylase is an important allosteric enzyme in carbohydrate metabolism. Enzymes from different sources differ in their regulatory mechanisms and in their natural substrates. However, all known phosphorylases share catalytic and structural properties. The sequence is that of Glycogen phosphorylase (glgP) from Chlamydia trachomatis serovar D (strain ATCC VR-885 / DSM 19411 / UW-3/Cx).